Here is a 69-residue protein sequence, read N- to C-terminus: Conotoxin Cal12.1p4 (69 aa).

Positions 1-23 (DLITNSYTRGKPRHVTSWRNLKT) are excised as a propeptide.

Post-translationally, contains 4 disulfide bonds. As to expression, expressed by the venom duct.

Its subcellular location is the secreted. In Californiconus californicus (California cone), this protein is Conotoxin Cal12.1p4.